The chain runs to 368 residues: Peptide chain release factor 2 (368 aa).

Gln-249 bears the N5-methylglutamine mark.

This sequence belongs to the prokaryotic/mitochondrial release factor family. In terms of processing, methylated by PrmC. Methylation increases the termination efficiency of RF2.

Its subcellular location is the cytoplasm. Peptide chain release factor 2 directs the termination of translation in response to the peptide chain termination codons UGA and UAA. This chain is Peptide chain release factor 2, found in Rhodococcus erythropolis (strain PR4 / NBRC 100887).